We begin with the raw amino-acid sequence, 373 residues long: Erythronate-4-phosphate dehydrogenase (373 aa).

Substrate contacts are provided by serine 45 and threonine 66. Residues aspartate 146 and threonine 175 each contribute to the NAD(+) site. Arginine 208 is a catalytic residue. Aspartate 232 contributes to the NAD(+) binding site. Glutamate 237 is an active-site residue. Histidine 254 (proton donor) is an active-site residue. NAD(+) is bound at residue glycine 257. Tyrosine 258 is a substrate binding site.

The protein belongs to the D-isomer specific 2-hydroxyacid dehydrogenase family. PdxB subfamily. As to quaternary structure, homodimer.

Its subcellular location is the cytoplasm. It carries out the reaction 4-phospho-D-erythronate + NAD(+) = (R)-3-hydroxy-2-oxo-4-phosphooxybutanoate + NADH + H(+). It participates in cofactor biosynthesis; pyridoxine 5'-phosphate biosynthesis; pyridoxine 5'-phosphate from D-erythrose 4-phosphate: step 2/5. Functionally, catalyzes the oxidation of erythronate-4-phosphate to 3-hydroxy-2-oxo-4-phosphonooxybutanoate. This Serratia proteamaculans (strain 568) protein is Erythronate-4-phosphate dehydrogenase.